The sequence spans 572 residues: Cytochrome P450 monooxygenase xilC (572 aa).

A heme-binding site is contributed by C515.

The protein belongs to the cytochrome P450 family. It depends on heme as a cofactor.

It functions in the pathway secondary metabolite biosynthesis. Cytochrome P450 monooxygenase; part of the gene cluster that mediates the biosynthesis of the 6-methyl-2-pyrone derivative xylariolide D. XilC hydroxylates the 5-alkyl-6-methyl-2-pyrone backbone called prexylariolide D, produced by the highly reducing polyketide synthase xilA, on its side chain to form xylariolide D. In Penicillium crustosum (Blue mold fungus), this protein is Cytochrome P450 monooxygenase xilC.